Reading from the N-terminus, the 208-residue chain is CASP-like protein 4A4 (208 aa).

The Cytoplasmic segment spans residues 1 to 53 (MKELKDHVVVITYGPSSEASVTASPVSQQTPSLFAYSVTPSASRFSSRRASVH). A helical membrane pass occupies residues 54-74 (VIGLVLRFITMVLCFVSALSL). The Extracellular portion of the chain corresponds to 75–92 (AVNVQRPSKRHLTQNSSS). Residue Asn-89 is glycosylated (N-linked (GlcNAc...) asparagine). The helical transmembrane segment at 93–113 (FASYPELLYCFGVAVIGFVYT) threads the bilayer. At 114 to 141 (SLQTFKGVCDITHRGVLISEPLSDYISF) the chain is on the cytoplasmic side. Residues 142-162 (IFDQVICYLLVSSSSVAIAWI) form a helical membrane-spanning segment. Topologically, residues 163 to 176 (QHINEDAIKTLRNN) are extracellular. The N-linked (GlcNAc...) asparagine glycan is linked to Asn-175. The helical transmembrane segment at 177-197 (SIVSVSMSFSAFLVLTLSGLL) threads the bilayer. The Cytoplasmic portion of the chain corresponds to 198–208 (SGYKLCKRFMW).

This sequence belongs to the Casparian strip membrane proteins (CASP) family. In terms of assembly, homodimer and heterodimers.

It is found in the cell membrane. The polypeptide is CASP-like protein 4A4 (Arabidopsis thaliana (Mouse-ear cress)).